The primary structure comprises 434 residues: Nicotinate phosphoribosyltransferase (434 aa).

A Phosphohistidine; by autocatalysis modification is found at His-242.

It belongs to the NAPRTase family. Transiently phosphorylated on a His residue during the reaction cycle. Phosphorylation strongly increases the affinity for substrates and increases the rate of nicotinate D-ribonucleotide production. Dephosphorylation regenerates the low-affinity form of the enzyme, leading to product release.

The catalysed reaction is nicotinate + 5-phospho-alpha-D-ribose 1-diphosphate + ATP + H2O = nicotinate beta-D-ribonucleotide + ADP + phosphate + diphosphate. It functions in the pathway cofactor biosynthesis; NAD(+) biosynthesis; nicotinate D-ribonucleotide from nicotinate: step 1/1. Catalyzes the synthesis of beta-nicotinate D-ribonucleotide from nicotinate and 5-phospho-D-ribose 1-phosphate at the expense of ATP. The sequence is that of Nicotinate phosphoribosyltransferase from Rhizobium etli (strain ATCC 51251 / DSM 11541 / JCM 21823 / NBRC 15573 / CFN 42).